Reading from the N-terminus, the 103-residue chain is NADH-quinone oxidoreductase subunit K 1 (103 aa).

The next 3 membrane-spanning stretches (helical) occupy residues 7 to 27, 31 to 51, and 63 to 83; these read ISWFLTLSAILFALGVAGFLF, IITVFMSIELMLNAVNLSFVT, and LFTFFVMVVAAAEAAVGLAII.

This sequence belongs to the complex I subunit 4L family. NDH-1 is composed of 14 different subunits. Subunits NuoA, H, J, K, L, M, N constitute the membrane sector of the complex.

It localises to the cell inner membrane. The enzyme catalyses a quinone + NADH + 5 H(+)(in) = a quinol + NAD(+) + 4 H(+)(out). Its function is as follows. NDH-1 shuttles electrons from NADH, via FMN and iron-sulfur (Fe-S) centers, to quinones in the respiratory chain. The immediate electron acceptor for the enzyme in this species is believed to be ubiquinone. Couples the redox reaction to proton translocation (for every two electrons transferred, four hydrogen ions are translocated across the cytoplasmic membrane), and thus conserves the redox energy in a proton gradient. This is NADH-quinone oxidoreductase subunit K 1 from Solibacter usitatus (strain Ellin6076).